We begin with the raw amino-acid sequence, 305 residues long: Ribonuclease Z (305 aa).

Zn(2+) is bound by residues His61, His63, Asp65, His66, His138, Asp208, and His266. Asp65 functions as the Proton acceptor in the catalytic mechanism.

It belongs to the RNase Z family. Homodimer. Zn(2+) serves as cofactor.

It catalyses the reaction Endonucleolytic cleavage of RNA, removing extra 3' nucleotides from tRNA precursor, generating 3' termini of tRNAs. A 3'-hydroxy group is left at the tRNA terminus and a 5'-phosphoryl group is left at the trailer molecule.. Its function is as follows. Zinc phosphodiesterase, which displays some tRNA 3'-processing endonuclease activity. Probably involved in tRNA maturation, by removing a 3'-trailer from precursor tRNA. In Methanosarcina mazei (strain ATCC BAA-159 / DSM 3647 / Goe1 / Go1 / JCM 11833 / OCM 88) (Methanosarcina frisia), this protein is Ribonuclease Z.